Here is a 92-residue protein sequence, read N- to C-terminus: Evasin P942 (92 aa).

Residues 1–26 (MEVKTFAFLQIAVLIALGLHLAPAGS) form the signal peptide. 3 cysteine pairs are disulfide-bonded: C44-C63, C48-C65, and C59-C76. N47 carries N-linked (GlcNAc...) asparagine glycosylation. A glycan (N-linked (GlcNAc...) asparagine) is linked at N70.

The protein resides in the secreted. Salivary chemokine-binding protein which binds to host chemokines CXCL1, CXCL2, CXCL3, CXCL4, CXCL5, CXCL6, CXCL10, CXCL11 and CXCL13. In Ixodes ricinus (Common tick), this protein is Evasin P942.